Here is an 897-residue protein sequence, read N- to C-terminus: Alpha-actinin-2 (897 aa).

Residues 1–257 are actin-binding; the sequence is MNSMNQIETN…IMTYVSCFYH (257 aa). Calponin-homology (CH) domains follow at residues 41–145 and 154–260; these read KQQR…LRFA and TSAK…HAFA. Spectrin repeat units lie at residues 284 to 394, 404 to 509, 519 to 630, and 640 to 743; these read RLME…WLLN, HLAE…ALER, QLHL…SLQE, and RLRR…EVET. EF-hand domains follow at residues 756–791 and 792–827; these read EQMN…MGYD and LGEA…ETAD. Positions 769, 773, 780, 805, 807, and 811 each coordinate Ca(2+).

Belongs to the alpha-actinin family. In terms of assembly, homodimer; antiparallel. Post-translationally, ubiquitinated by FBXL22, leading to proteasomal degradation.

It localises to the cytoplasm. The protein localises to the myofibril. The protein resides in the sarcomere. It is found in the z line. In terms of biological role, F-actin cross-linking protein which is thought to anchor actin to a variety of intracellular structures. This is a bundling protein. This Gallus gallus (Chicken) protein is Alpha-actinin-2 (ACTN2).